Consider the following 315-residue polypeptide: ADP/ATP translocase 4 (315 aa).

Residues 1–19 (MHREPPKKKAEKRLFDASS) lie on the Mitochondrial intermembrane side of the membrane. A Solcar 1 repeat occupies 18 to 110 (SSFGKDLLAG…FAFKDKYKQL (93 aa)). The helical transmembrane segment at 20–49 (FGKDLLAGGVAAAVSKTAVAPIERVKLLLQ) threads the bilayer. Residues 50-86 (VQASSKQISPEARYKGMVDCLVRIPREQGFFSFWRGN) lie on the Mitochondrial matrix side of the membrane. The chain crosses the membrane as a helical span at residues 87-111 (LANVIRYFPTQALNFAFKDKYKQLF). ADP-binding residues include R92 and K104. Topologically, residues 112–121 (MSGVNKEKQF) are mitochondrial intermembrane. The chain crosses the membrane as a helical span at residues 122 to 142 (WRWFLANLASGGAAGATSLCV). Solcar repeat units follow at residues 123–213 (RWFL…VKGL) and 220–307 (TPFL…IKEF). Over 143 to 190 (VYPLDFARTRLGVDIGKGPEERQFKGLGDCIMKIAKSDGIAGLYQGFG) the chain is Mitochondrial matrix. Residues 191 to 211 (VSVQGIIVYRASYFGAYDTVK) form a helical membrane-spanning segment. The Mitochondrial intermembrane segment spans residues 212–222 (GLLPKPKKTPF). Residues 223–243 (LVSFFIAQVVTTCSGILSYPF) traverse the membrane as a helical segment. The Mitochondrial matrix portion of the chain corresponds to 244–283 (DTVRRRMMMQSGEAKRQYKGTLDCFVKIYQHEGINSFFRG). Residue R247 participates in ADP binding. The segment at 247 to 252 (RRRMMM) is important for transport activity. Positions 247–252 (RRRMMM) match the Nucleotide carrier signature motif motif. Residues 284 to 301 (AFSNVLRGTGGALVLVLY) traverse the membrane as a helical segment. Over 302–315 (DKIKEFFHIDIGGR) the chain is Mitochondrial intermembrane.

The protein belongs to the mitochondrial carrier (TC 2.A.29) family. In terms of assembly, monomer.

Its subcellular location is the mitochondrion inner membrane. It localises to the membrane. The protein resides in the cell projection. The protein localises to the cilium. It is found in the flagellum membrane. The catalysed reaction is ADP(in) + ATP(out) = ADP(out) + ATP(in). It catalyses the reaction dATP(out) + ADP(in) = dATP(in) + ADP(out). The enzyme catalyses dADP(in) + ADP(out) = dADP(out) + ADP(in). It carries out the reaction H(+)(in) = H(+)(out). The matrix-open state (m-state) is inhibited by the membrane-permeable bongkrekic acid (BKA). The cytoplasmic-open state (c-state) is inhibited by the membrane-impermeable toxic inhibitor carboxyatractyloside (CATR). Proton transporter activity is inhibited by ADP:ATP antiporter activity. Its function is as follows. ADP:ATP antiporter that mediates import of ADP into the mitochondrial matrix for ATP synthesis, and export of ATP out to fuel the cell. Cycles between the cytoplasmic-open state (c-state) and the matrix-open state (m-state): operates by the alternating access mechanism with a single substrate-binding site intermittently exposed to either the cytosolic (c-state) or matrix (m-state) side of the inner mitochondrial membrane. Specifically required during spermatogenesis, probably to mediate ADP:ATP exchange in spermatocytes. Large ATP supplies from mitochondria may be critical for normal progression of spermatogenesis during early stages of meiotic prophase I, including DNA double-strand break repair and chromosomal synapsis. In addition to its ADP:ATP antiporter activity, also involved in mitochondrial uncoupling and mitochondrial permeability transition pore (mPTP) activity. Plays a role in mitochondrial uncoupling by acting as a proton transporter: proton transport uncouples the proton flows via the electron transport chain and ATP synthase to reduce the efficiency of ATP production and cause mitochondrial thermogenesis. Proton transporter activity is inhibited by ADP:ATP antiporter activity, suggesting that SLC25A31/ANT4 acts as a master regulator of mitochondrial energy output by maintaining a delicate balance between ATP production (ADP:ATP antiporter activity) and thermogenesis (proton transporter activity). Proton transporter activity requires free fatty acids as cofactor, but does not transport it. Among nucleotides, may also exchange ADP for dATP and dADP. Also plays a key role in mPTP opening, a non-specific pore that enables free passage of the mitochondrial membranes to solutes of up to 1.5 kDa, and which contributes to cell death. It is however unclear if SLC25A31/ANT4 constitutes a pore-forming component of mPTP or regulates it. The sequence is that of ADP/ATP translocase 4 from Macaca fascicularis (Crab-eating macaque).